The primary structure comprises 330 residues: Succinoglycan biosynthesis protein ExoA (330 aa).

The next 3 helical transmembrane spans lie at 116 to 136 (ALATGADSVVVAMQTVGFSTF), 260 to 280 (IAFGALLAIVNWMAVVPVGVW), and 299 to 319 (YGPLAAVAAMVMHLAWSAGFW).

This sequence belongs to the glycosyltransferase 2 family.

The protein resides in the cell membrane. It participates in glycan metabolism; exopolysaccharide biosynthesis. Functionally, glycosyltransferase required for the synthesis of succinoglycan (EPS I). Needed for the addition of the second sugar (glucose). Catalyzes the formation of a beta-1,3 linkage with the galactose lipid carrier. In Rhizobium meliloti (strain 1021) (Ensifer meliloti), this protein is Succinoglycan biosynthesis protein ExoA (exoA).